Reading from the N-terminus, the 274-residue chain is MQNITQSWFVQGMIKATTDAWLKGWDERNGGNLTLRLDDADIAPYHGNFHAQPRYIPLSQPMPLLANTPFIVTGSGKFFRNVQLDPAANLGVVKVDSDGAGYHILWGLTNEAVPTSELPAHFLSHCERIKATNGKDRVIMHCHATNLIALTYVLENDTAVFTRQLWEGSTECLVVFPDGVGILPWMVPGTDEIGQATAQEMQKHSLVLWPFHGVFSSGPTLDETFGLIDTAEKSAQVLVKGYSMGGMKQTISREELIALGQRFGVTPLASALAL.

Residue Glu117 is part of the active site. Residues His141, His143, and His212 each contribute to the Zn(2+) site.

Belongs to the aldolase class II family. RhaD subfamily. As to quaternary structure, homotetramer. It depends on Zn(2+) as a cofactor.

Its subcellular location is the cytoplasm. It catalyses the reaction L-rhamnulose 1-phosphate = (S)-lactaldehyde + dihydroxyacetone phosphate. The protein operates within carbohydrate degradation; L-rhamnose degradation; glycerone phosphate from L-rhamnose: step 3/3. Its function is as follows. Catalyzes the reversible cleavage of L-rhamnulose-1-phosphate to dihydroxyacetone phosphate (DHAP) and L-lactaldehyde. The protein is Rhamnulose-1-phosphate aldolase of Escherichia coli O7:K1 (strain IAI39 / ExPEC).